We begin with the raw amino-acid sequence, 153 residues long: Ribosome maturation factor RimP (153 aa).

Belongs to the RimP family.

The protein resides in the cytoplasm. Its function is as follows. Required for maturation of 30S ribosomal subunits. The polypeptide is Ribosome maturation factor RimP (Burkholderia pseudomallei (strain 1710b)).